We begin with the raw amino-acid sequence, 977 residues long: Zinc finger CCCH domain-containing protein 7B (977 aa).

TPR repeat units lie at residues 1–27 (MERQKRKADIEKGLQFIQSTLPLKQEE), 36–69 (VQNLFAEGNDLFREKDYKQALVQYMEGLNVADYA), and 82–115 (CKLHVNRAACYFTMGLYEKALEDSEKALGLDSES). Serine 217 carries the post-translational modification Phosphoserine. An LD motif; interaction with NSP3 motif is present at residues 248–256 (STDSLDDFS). A phosphoserine mark is found at serine 364 and serine 367. The tract at residues 365–403 (FGSTRGSLDKPDSFMEETNSQDHRPPSGAQKPAPSPEPC) is disordered. 3 C3H1-type zinc fingers span residues 484 to 508 (LCKDMINKQDCKYGDNCTFAYHQEE), 616 to 638 (VCRHEVRYGCLREDSCHFAHSFI), and 754 to 782 (PQQYDLCIHAQNGRKCQYVGNCSFAHSPE). Residues 842–866 (YHCWLCGKNSNSKKQWQQHIQSEKH) form a C2H2-type zinc finger. A C3H1-type 4 zinc finger spans residues 886–914 (MGEFRLCDRLQKGKACPDGDKCRCAHGQE).

In terms of assembly, (Microbial infection) Interacts (via LD motif) with rotavirus A NSP3 (via the coiled-coil region).

Its subcellular location is the nucleus. Its function is as follows. May be a specific regulator of miRNA biogenesis. Binds to microRNAs MIR7-1, MIR16-2 and MIR29A hairpins recognizing the 'ATA(A/T)' motif in the apical loop. The sequence is that of Zinc finger CCCH domain-containing protein 7B (ZC3H7B) from Homo sapiens (Human).